Reading from the N-terminus, the 569-residue chain is Cationic amino acid transporter 5 (569 aa).

The Cytoplasmic segment spans residues Met-1–Cys-67. A helical membrane pass occupies residues Leu-68 to Val-88. The Extracellular portion of the chain corresponds to Leu-89 to Gln-97. A helical transmembrane segment spans residues Ala-98–Phe-118. Residues Cys-119 to Asp-143 lie on the Cytoplasmic side of the membrane. Residues Phe-144 to Val-164 form a helical membrane-spanning segment. Residues Ala-165–Gly-192 lie on the Extracellular side of the membrane. The helical transmembrane segment at Phe-193–Ile-213 threads the bilayer. The Cytoplasmic portion of the chain corresponds to Ser-214–Asn-222. A helical membrane pass occupies residues Trp-223–His-243. Over Ala-244 to Pro-251 the chain is Extracellular. The helical transmembrane segment at Phe-252 to Gly-272 threads the bilayer. The Cytoplasmic segment spans residues Gly-273 to Asp-290. The chain crosses the membrane as a helical span at residues Ile-291 to Leu-311. Residues Ser-312–Lys-341 are Extracellular-facing. A helical transmembrane segment spans residues Tyr-342–Gly-362. The Cytoplasmic segment spans residues Gln-363 to Thr-389. Residues Pro-390–Leu-410 form a helical membrane-spanning segment. Position 411 (Asp-411) is a topological domain, extracellular. A helical transmembrane segment spans residues Val-412 to Leu-432. Topologically, residues Leu-433–Lys-450 are cytoplasmic. A helical membrane pass occupies residues Leu-451 to Met-471. The Extracellular segment spans residues Gln-472–Trp-477. A helical transmembrane segment spans residues Ile-478–Val-498. The Cytoplasmic portion of the chain corresponds to Pro-499–Lys-505. The helical transmembrane segment at Val-506 to Leu-526 threads the bilayer. Residues Met-527 to Arg-537 are Extracellular-facing. The helical transmembrane segment at Phe-538–Phe-558 threads the bilayer. Topologically, residues Asp-559–Thr-569 are cytoplasmic.

The protein belongs to the amino acid-polyamine-organocation (APC) superfamily. Cationic amino acid transporter (CAT) (TC 2.A.3.3) family. Expressed in roots, stems, flowers, seeds, and leaves. Mostly present in leaf rims and cotyledons of developing seedlings.

It is found in the cell membrane. Its function is as follows. High-affinity permease involved in the transport of the cationic amino acids (e.g. arginine, and, to a lower extent, citrulline and glutamate). Transport mostly basic amino acids, and, to a lower extent neutral and acidic amino acids. The protein is Cationic amino acid transporter 5 (CAT5) of Arabidopsis thaliana (Mouse-ear cress).